A 309-amino-acid chain; its full sequence is MVKVYAPASIGNVSVGFDVLGAAVSPVDGSLLGDCVSVEAADLFSLRNEGRFVSKLPDNPKENIVYQCWELFCQEIGKTVPVAMTLEKNMPIGSGLGSSACSVVAGLMAMNEFCGKPLDDTRLLTLMGELEGRISGSVHYDNVAPCFLGGVQLMLEENGIISQPVPSFDDWLWVMAYPGIKVSTAEARAILPAQYRRQDCISHGRYLAGFIHACHTGQAALAAKLMKDVIAEPYRTKLLPGFAAARQAAEDIGALACGISGSGPTLFSVCNDMTSAQRLADWLRDNYLQNDEGFVHICRLDTTGARQLG.

91–101 (PIGSGLGSSAC) lines the ATP pocket.

This sequence belongs to the GHMP kinase family. Homoserine kinase subfamily.

The protein resides in the cytoplasm. The catalysed reaction is L-homoserine + ATP = O-phospho-L-homoserine + ADP + H(+). Its pathway is amino-acid biosynthesis; L-threonine biosynthesis; L-threonine from L-aspartate: step 4/5. Catalyzes the ATP-dependent phosphorylation of L-homoserine to L-homoserine phosphate. The chain is Homoserine kinase from Pectobacterium carotovorum subsp. carotovorum (strain PC1).